The chain runs to 375 residues: MVDNSKIRVVVGMSGGVDSSVSALLLKQQGFDVVGVFMKNWDDTDDSGVCTATEDYEDVKKVADEIGIPYYSINFEKDYWERVFEYFLDEYKKGRTPNPDVMCNKEIKFKSFLDFAMDLDADYIAMGHYAATRVDDNGVVHMMRPKDGNKDQTYFLSQLSQDQLKKVIFPLANLTKPQVREIAIASGLATAKKKDSTGICFIGERNFKKFLSEFLPAQSGKMVTPDGKVVGEHAGLMYYTIGQRSGLGLGSTKESTDPWFVVGKDLKKNELIVEQGYDSKLLYATSLDASGVSFFTGQPDHDVDLKCTAKFRYRQPDVGVTMHYRAKDNTVHVEFDEPARAVTPGQAIVFYNGEECLGGATIDRAYQNEKQLQLV.

Residues 12-19 (GMSGGVDS) and M38 contribute to the ATP site. An interaction with target base in tRNA region spans residues 98–100 (NPD). Residue C103 is the Nucleophile of the active site. A disulfide bridge links C103 with C200. G127 contacts ATP. The segment at 150-152 (KDQ) is interaction with tRNA. Residue C200 is the Cysteine persulfide intermediate of the active site. Residues 312-313 (RY) form an interaction with tRNA region.

This sequence belongs to the MnmA/TRMU family.

Its subcellular location is the cytoplasm. It carries out the reaction S-sulfanyl-L-cysteinyl-[protein] + uridine(34) in tRNA + AH2 + ATP = 2-thiouridine(34) in tRNA + L-cysteinyl-[protein] + A + AMP + diphosphate + H(+). In terms of biological role, catalyzes the 2-thiolation of uridine at the wobble position (U34) of tRNA, leading to the formation of s(2)U34. This chain is tRNA-specific 2-thiouridylase MnmA, found in Lactobacillus johnsonii (strain CNCM I-12250 / La1 / NCC 533).